Here is a 1088-residue protein sequence, read N- to C-terminus: RNA-directed RNA polymerase (1088 aa).

The RdRp catalytic domain occupies 501-687; that stretch reads LSYGDVTRFL…AKRYIAGGKI (187 aa).

Belongs to the reoviridae RNA-directed RNA polymerase family. Interacts with VP3 (Potential). Interacts with VP2; this interaction activates VP1. Interacts with NSP5; this interaction is probably necessary for the formation of functional virus factories. Interacts with NSP2; this interaction is weak. The cofactor is Mg(2+).

Its subcellular location is the virion. The catalysed reaction is RNA(n) + a ribonucleoside 5'-triphosphate = RNA(n+1) + diphosphate. Functionally, RNA-directed RNA polymerase that is involved in both transcription and genome replication. Together with VP3 capping enzyme, forms an enzyme complex positioned near the channels situated at each of the five-fold vertices of the core. Following infection, the outermost layer of the virus is lost, leaving a double-layered particle (DLP) made up of the core and VP6 shell. VP1 then catalyzes the transcription of fully conservative plus-strand genomic RNAs that are extruded through the DLP's channels into the cytoplasm where they function as mRNAs for translation of viral proteins. One copy of each of the viral (+)RNAs is also recruited during core assembly, together with newly synthesized polymerase complexes and VP2. The polymerase of these novo-formed particles catalyzes the synthesis of complementary minus-strands leading to dsRNA formation. To do so, the polymerase specifically recognizes and binds 4 bases 5'-UGUG-3' in the conserved 3'-sequence of plus-strand RNA templates. VP2 presumably activates the autoinhibited VP1-RNA complex to coordinate packaging and genome replication. Once dsRNA synthesis is complete, the polymerase switches to the transcriptional mode, thus providing secondary transcription. This is RNA-directed RNA polymerase from Bos taurus (Bovine).